Consider the following 255-residue polypeptide: BTB/POZ domain-containing protein KCTD14 (255 aa).

A disordered region spans residues 1 to 29; sequence MWQGCAVERPVGRMTSQTPLPQSPRPRRP. The 98-residue stretch at 33–130 folds into the BTB domain; it reads TVVELNVGGE…LLEDMPQIFG (98 aa).

The protein is BTB/POZ domain-containing protein KCTD14 (KCTD14) of Homo sapiens (Human).